Consider the following 130-residue polypeptide: Ribonuclease P protein component 2 (130 aa).

The protein belongs to the eukaryotic/archaeal RNase P protein component 2 family. In terms of assembly, consists of a catalytic RNA component and at least 4-5 protein subunits.

It localises to the cytoplasm. The catalysed reaction is Endonucleolytic cleavage of RNA, removing 5'-extranucleotides from tRNA precursor.. In terms of biological role, part of ribonuclease P, a protein complex that generates mature tRNA molecules by cleaving their 5'-ends. This is Ribonuclease P protein component 2 from Methanococcus maripaludis (strain C7 / ATCC BAA-1331).